The chain runs to 74 residues: Conotoxin MiEr93 (74 aa).

The N-terminal stretch at 1 to 22 is a signal peptide; that stretch reads MKLTCVLIIAVLFLTAYQLATA. A propeptide spanning residues 23 to 45 is cleaved from the precursor; it reads ASYAKGKQKHRALRPADKHLRLT. Cystine bridges form between Cys-48/Cys-62, Cys-55/Cys-66, and Cys-61/Cys-73.

It belongs to the conotoxin O1 superfamily. As to expression, expressed by the venom duct.

The protein localises to the secreted. The chain is Conotoxin MiEr93 from Conus miles (Soldier cone).